A 209-amino-acid polypeptide reads, in one-letter code: Redox-sensing transcriptional repressor Rex (209 aa).

The segment at residues 16 to 55 (LYYRFIQNLSLSGKQRVSSAELSEAVKVDSATIRRDFSYF) is a DNA-binding region (H-T-H motif). 90-95 (GVGNLG) is an NAD(+) binding site.

This sequence belongs to the transcriptional regulatory Rex family. In terms of assembly, homodimer.

It localises to the cytoplasm. Functionally, modulates transcription in response to changes in cellular NADH/NAD(+) redox state. This chain is Redox-sensing transcriptional repressor Rex, found in Bacillus cereus (strain G9842).